A 219-amino-acid polypeptide reads, in one-letter code: Small ribosomal subunit protein uS3c (219 aa).

Positions 47-119 constitute a KH type-2 domain; it reads VRKYVRTAEN…KFIISLAEVE (73 aa).

The protein belongs to the universal ribosomal protein uS3 family. In terms of assembly, part of the 30S ribosomal subunit.

The protein resides in the plastid. It is found in the chloroplast. The protein is Small ribosomal subunit protein uS3c (rps3) of Staurastrum punctulatum (Green alga).